The sequence spans 241 residues: GTP cyclohydrolase III (241 aa).

This sequence belongs to the archaeal-type GTP cyclohydrolase family.

It carries out the reaction GTP + 3 H2O = 2-amino-5-formylamino-6-(5-phospho-D-ribosylamino)pyrimidin-4(3H)-one + 2 phosphate + 2 H(+). Catalyzes the formation of 2-amino-5-formylamino-6-ribofuranosylamino-4(3H)-pyrimidinone ribonucleotide monophosphate and inorganic phosphate from GTP. Also has an independent pyrophosphate phosphohydrolase activity. The sequence is that of GTP cyclohydrolase III from Aeropyrum pernix (strain ATCC 700893 / DSM 11879 / JCM 9820 / NBRC 100138 / K1).